We begin with the raw amino-acid sequence, 459 residues long: Probable Delta(5) fatty acid desaturase C (459 aa).

Positions 9-87 (KKLYSWKEIS…LKQYEIGQVS (79 aa)) constitute a Cytochrome b5 heme-binding domain. Positions 45 and 68 each coordinate heme. 2 helical membrane-spanning segments follow: residues 121-141 (FAFGIIARLIFVYWFLITSYY) and 151-171 (FYLNCLLAIVYSLSNSLFSLH). Residues 174-178 (HDACH) carry the Histidine box-1 motif. Residues 187-207 (VWKWLGATYDLFIGASFFYWC) traverse the membrane as a helical segment. The Histidine box-2 signature appears at 210-215 (HVIGHH). 2 helical membrane passes run 289-309 (FEIISFIIGKLVFIVFRFIIP) and 315-335 (LVNLLTYFFIAEFFFGLYLSF). Residues 394 to 398 (QVVHH) carry the Histidine box-3 motif.

This sequence belongs to the fatty acid desaturase type 1 family. Requires Fe cation as cofactor.

The protein localises to the membrane. This Dictyostelium discoideum (Social amoeba) protein is Probable Delta(5) fatty acid desaturase C.